Here is a 413-residue protein sequence, read N- to C-terminus: S-adenosylmethionine synthase (413 aa).

His15 contributes to the ATP binding site. Asp17 provides a ligand contact to Mg(2+). Residue Glu43 participates in K(+) binding. Residues Glu56 and Gln100 each contribute to the L-methionine site. The tract at residues 100–110 (QSPDISQGVNE) is flexible loop. ATP is bound by residues 171–173 (DGK), 248–249 (KF), Asp257, 263–264 (RK), Ala280, and Lys284. Position 257 (Asp257) interacts with L-methionine. Residue Lys288 coordinates L-methionine.

Belongs to the AdoMet synthase family. As to quaternary structure, homotetramer; dimer of dimers. Requires Mg(2+) as cofactor. K(+) serves as cofactor.

Its subcellular location is the cytoplasm. It catalyses the reaction L-methionine + ATP + H2O = S-adenosyl-L-methionine + phosphate + diphosphate. It participates in amino-acid biosynthesis; S-adenosyl-L-methionine biosynthesis; S-adenosyl-L-methionine from L-methionine: step 1/1. Catalyzes the formation of S-adenosylmethionine (AdoMet) from methionine and ATP. The overall synthetic reaction is composed of two sequential steps, AdoMet formation and the subsequent tripolyphosphate hydrolysis which occurs prior to release of AdoMet from the enzyme. The sequence is that of S-adenosylmethionine synthase from Prochlorococcus marinus subsp. pastoris (strain CCMP1986 / NIES-2087 / MED4).